The chain runs to 87 residues: Omega-lycotoxin-Am1b (87 aa).

The N-terminal stretch at 1–17 is a signal peptide; the sequence is MKLSIFFVLFFIAIAYC. Residues 18-40 constitute a propeptide that is removed on maturation; that stretch reads QPEFLDDEEDEVEETLPVAEEGR. Cystine bridges form between C44–C59, C51–C64, C58–C84, and C66–C82.

The protein belongs to the neurotoxin omega-lctx family. In terms of tissue distribution, expressed by the venom gland.

It is found in the secreted. Functionally, modulates Cav2.1/CACNA1A voltage-gated calcium channels (P/Q-type currents) in rat cerebellar Purkinje cells and hippocampal CA1-CA3 neurons. At saturating concentrations (&gt;10 nM) decelerates activation kinetics and slightly increases peak amplitude without affecting deactivation kinetics. In vivo, does not cause death when intravenously injected into mice. In rat models, through its activity on Cav2.1/CACNA1A, has an ameliorative effect on memory defects provoked by hyperstimulation of N-methyl-D-aspartate receptors (NMDARs) in the hippocampus. This chain is Omega-lycotoxin-Am1b, found in Alopecosa marikovskyi (Wolf spider).